We begin with the raw amino-acid sequence, 101 residues long: Integration host factor subunit beta (101 aa).

The protein belongs to the bacterial histone-like protein family. In terms of assembly, heterodimer of an alpha and a beta chain.

In terms of biological role, this protein is one of the two subunits of integration host factor, a specific DNA-binding protein that functions in genetic recombination as well as in transcriptional and translational control. The protein is Integration host factor subunit beta of Rhodopseudomonas palustris (strain BisB5).